Reading from the N-terminus, the 327-residue chain is RNA ligase 1 (327 aa).

Mg(2+) is required as a cofactor. The cofactor is Mn(2+). In terms of processing, AMPylates itself (auto-AMPylation).

It catalyses the reaction ATP + (ribonucleotide)n-3'-hydroxyl + 5'-phospho-(ribonucleotide)m = (ribonucleotide)n+m + AMP + diphosphate.. Its function is as follows. Functions as an RNA ligase, in vitro. The ligation reaction entails three nucleotidyl transfer steps. In the first step, the RNA ligase reacts with ATP in the absence of nucleic acid to form a covalent ligase-AMP intermediate and release pyrophosphate. In step 2, the ligase-AMP binds to the nucleic acid and transfers the adenylate to the 5'-PO4 terminus to form an adenylylated intermediate. In step 3, the RNA ligase directs the attack of the 3'-OH on the 5'-phosphoanhydride linkage, resulting in a repaired 3'-5' phosphodiester and release of AMP. Exhibits selectivity for single-stranded RNA substrates and may not have nick-sealing activity on double-stranded DNA-RNA hybrids. May play a role in maintaining RNA integrity under stress conditions, for example in response to reactive oxygen species (ROS). The sequence is that of RNA ligase 1 from Mus musculus (Mouse).